A 194-amino-acid polypeptide reads, in one-letter code: Cysteine and glycine-rich protein 3 (194 aa).

The tract at residues 1-5 (MPNWG) is interaction with TCAP. The LIM zinc-binding 1 domain occupies 10–61 (CGACEKTVYHAEEIQCNGRSFHKTCFHCMACRKALDSTTVAAHESEIYCKVC). The Nuclear localization signal signature appears at 64–69 (RRYGPK). The tract at residues 94–105 (QSPKPARSVTTS) is interaction with CLF2 and isoform 2. A phosphoserine mark is found at S95 and S153. The 52-residue stretch at 120–171 (CPRCGKSVYAAEKVMGGGKPWHKTCFRCAICGKSLESTNVTDKDGELYCKVC) folds into the LIM zinc-binding 2 domain.

In terms of assembly, self-associates. Oligomeric in the cytoplasm and monomeric in the nucleus. Homooligomers preferentially form along the actin cytoskeleton. Isoform 2 interacts with isoform 1. Isoform 1 but not isoform 2 interacts with MYOD1 and MYOG. Isoform 1 interacts with TCAP, ACTN2 and NRAP. Isoform 2 interacts with TCAP and alpha-actinin. Interacts with LDHD. Interacts (via N-terminus)with GLRX3 (via C-terminus) and PPP3CA; GLRX3 and calcineurin compete for interaction with CSRP3. Interacts with MYF6. Interacts with CFL2; the stoichiometry influences F-actin depolymerization and possibly two molecules of CFL2 can interact with one molecule of CSRP3 resulting in the highest functional impact; the interaction is stronger with phosphorylated CFL2. Post-translationally, phosphorylated by PKC/PRKCA. Cardiac and slow-twitch skeletal muscles. Isoform 2 is expressed in striated muscle. Isoform 2 is specifically expressed at higher levels in patients with neuromuscular diseases, such as limb-girdle muscular dystrophy 2A (LGMD2A), Duchenne muscular dystrophy (DMD) and dermatomyositis.

The protein localises to the nucleus. The protein resides in the cytoplasm. It is found in the cytoskeleton. It localises to the myofibril. Its subcellular location is the sarcomere. The protein localises to the z line. Positive regulator of myogenesis. Acts as a cofactor for myogenic bHLH transcription factors such as MYOD1, and probably MYOG and MYF6. Enhances the DNA-binding activity of the MYOD1:TCF3 isoform E47 complex and may promote formation of a functional MYOD1:TCF3 isoform E47:MEF2A complex involved in myogenesis. Plays a crucial and specific role in the organization of cytosolic structures in cardiomyocytes. Could play a role in mechanical stretch sensing. May be a scaffold protein that promotes the assembly of interacting proteins at Z-line structures. It is essential for calcineurin anchorage to the Z line. Required for stress-induced calcineurin-NFAT activation. The role in regulation of cytoskeleton dynamics by association with CFL2 is reported conflictingly: Shown to enhance CFL2-mediated F-actin depolymerization dependent on the CSRP3:CFL2 molecular ratio, and also shown to reduce the ability of CLF1 and CFL2 to enhance actin depolymerization. Proposed to contribute to the maintenance of muscle cell integrity through an actin-based mechanism. Can directly bind to actin filaments, cross-link actin filaments into bundles without polarity selectivity and protect them from dilution- and cofilin-mediated depolymerization; the function seems to involve its self-association. In vitro can inhibit PKC/PRKCA activity. Proposed to be involved in cardiac stress signaling by down-regulating excessive PKC/PRKCA signaling. Functionally, may play a role in early sarcomere organization. Overexpression in myotubes negatively regulates myotube differentiation. By association with isoform 1 and thus changing the CSRP3 isoform 1:CFL2 stoichiometry is proposed to down-regulate CFL2-mediated F-actin depolymerization. In Homo sapiens (Human), this protein is Cysteine and glycine-rich protein 3 (CSRP3).